Reading from the N-terminus, the 183-residue chain is NADH dehydrogenase [ubiquinone] iron-sulfur protein 4, mitochondrial (183 aa).

The transit peptide at 1 to 28 (MSALRQVMCRSTASLQLYQANRAAAARW) directs the protein to the mitochondrion. Serine 181 is subject to Phosphoserine.

Belongs to the complex I NDUFS4 subunit family.

The protein resides in the mitochondrion inner membrane. Functionally, accessory subunit of the mitochondrial membrane respiratory chain NADH dehydrogenase (Complex I), that is believed not to be involved in catalysis. Complex I functions in the transfer of electrons from NADH to the respiratory chain. The immediate electron acceptor for the enzyme is believed to be ubiquinone. This is NADH dehydrogenase [ubiquinone] iron-sulfur protein 4, mitochondrial from Drosophila melanogaster (Fruit fly).